Reading from the N-terminus, the 456-residue chain is Proline-specific permease ProY (456 aa).

Residues 1–17 (MESNNKLKRGLSTRHIR) are Cytoplasmic-facing. Transmembrane regions (helical) follow at residues 18–38 (FMALGSAIGTGLFYGSADAIK) and 39–59 (MAGPSVLLAYIIGGVAAYIIM). The Cytoplasmic portion of the chain corresponds to 60-95 (RALGEMSVHNPAASSFSRYAQENLGPLAGYITGWTY). 2 consecutive transmembrane segments (helical) span residues 96–116 (CFEILIVAIADVTAFGIYMGV) and 117–137 (WFPAVPHWIWVLSVVLIICAI). The Cytoplasmic segment spans residues 138–156 (NLMSVKVFGELEFWFSFFK). The chain crosses the membrane as a helical span at residues 157 to 177 (VATIIIMIVAGIGIIVWGIGN). The Periplasmic portion of the chain corresponds to 178-197 (GGQPTGIHNLWSNGGFFSNG). Residues 198–218 (WLGMIMSLQMVMFAYGGIEII) form a helical membrane-spanning segment. Topologically, residues 219–242 (GITAGEAKDPEKSIPRAINSVPMR) are cytoplasmic. A helical transmembrane segment spans residues 243–263 (ILVFYVGTLFVIMSIYPWNQV). Topologically, residues 264-277 (GTNGSPFVLTFQHM) are periplasmic. The helical transmembrane segment at 278 to 298 (GITFAASILNFVVLTASLSAI) threads the bilayer. At 299 to 331 (NSDVFGVGRMLHGMAEQGSAPKVFAKTSRRGIP) the chain is on the cytoplasmic side. Residues 332-352 (WVTVLVMTIALLFAVYLNYIM) form a helical membrane-spanning segment. At 353–355 (PEN) the chain is on the periplasmic side. A helical transmembrane segment spans residues 356–376 (VFLVIASLATFATVWVWIMIL). Topologically, residues 377–399 (LSQIAFRRRLPPEEVKALKFKVP) are cytoplasmic. A helical membrane pass occupies residues 400-420 (GGVVTTIAGLIFLVFIIALIG). Residues 421 to 424 (YHPD) lie on the Periplasmic side of the membrane. A helical membrane pass occupies residues 425–445 (TRISLYVGFAWIVLLLIGWIF). At 446–456 (KRRRDRQLAQA) the chain is on the cytoplasmic side.

This sequence belongs to the amino acid-polyamine-organocation (APC) superfamily. Amino acid transporter (AAT) (TC 2.A.3.1) family.

Its subcellular location is the cell inner membrane. In terms of biological role, permease that is involved in the transport across the cytoplasmic membrane of proline. The protein is Proline-specific permease ProY (proY) of Salmonella typhimurium (strain LT2 / SGSC1412 / ATCC 700720).